The primary structure comprises 350 residues: N-acetyl-gamma-glutamyl-phosphate reductase (350 aa).

The active site involves C154.

It belongs to the NAGSA dehydrogenase family. Type 1 subfamily.

It is found in the cytoplasm. The enzyme catalyses N-acetyl-L-glutamate 5-semialdehyde + phosphate + NADP(+) = N-acetyl-L-glutamyl 5-phosphate + NADPH + H(+). The protein operates within amino-acid biosynthesis; L-arginine biosynthesis; N(2)-acetyl-L-ornithine from L-glutamate: step 3/4. Functionally, catalyzes the NADPH-dependent reduction of N-acetyl-5-glutamyl phosphate to yield N-acetyl-L-glutamate 5-semialdehyde. This chain is N-acetyl-gamma-glutamyl-phosphate reductase, found in Corynebacterium efficiens (strain DSM 44549 / YS-314 / AJ 12310 / JCM 11189 / NBRC 100395).